We begin with the raw amino-acid sequence, 532 residues long: Protein FAM227B (532 aa).

Residues 432-482 (DNKKDFKRVKQRIKDDIKFLREQQELIDKELDRIQAKASKNLQEVKNEFEN) are a coiled coil. Residues 494–532 (KEEYGGSTSASESPQSMQSPQSSSSFPTISEDFNNVEEG) are disordered. Residues 500 to 523 (STSASESPQSMQSPQSSSSFPTIS) are compositionally biased toward low complexity.

Belongs to the FAM227 family.

This is Protein FAM227B (Fam227b) from Mus musculus (Mouse).